The following is a 416-amino-acid chain: Multifunctional CCA protein (416 aa).

The ATP site is built by Gly-8 and Arg-11. CTP-binding residues include Gly-8 and Arg-11. Mg(2+)-binding residues include Asp-21 and Asp-23. Residues Arg-91, Arg-137, and Arg-140 each coordinate ATP. CTP contacts are provided by Arg-91, Arg-137, and Arg-140. In terms of domain architecture, HD spans 228–329 (TGLHTMMVLA…IKLFDKADFW (102 aa)).

This sequence belongs to the tRNA nucleotidyltransferase/poly(A) polymerase family. Bacterial CCA-adding enzyme type 1 subfamily. As to quaternary structure, monomer. Can also form homodimers and oligomers. It depends on Mg(2+) as a cofactor. Ni(2+) is required as a cofactor.

The enzyme catalyses a tRNA precursor + 2 CTP + ATP = a tRNA with a 3' CCA end + 3 diphosphate. It carries out the reaction a tRNA with a 3' CCA end + 2 CTP + ATP = a tRNA with a 3' CCACCA end + 3 diphosphate. Catalyzes the addition and repair of the essential 3'-terminal CCA sequence in tRNAs without using a nucleic acid template. Adds these three nucleotides in the order of C, C, and A to the tRNA nucleotide-73, using CTP and ATP as substrates and producing inorganic pyrophosphate. tRNA 3'-terminal CCA addition is required both for tRNA processing and repair. Also involved in tRNA surveillance by mediating tandem CCA addition to generate a CCACCA at the 3' terminus of unstable tRNAs. While stable tRNAs receive only 3'-terminal CCA, unstable tRNAs are marked with CCACCA and rapidly degraded. The sequence is that of Multifunctional CCA protein from Shewanella sp. (strain MR-4).